The sequence spans 159 residues: 2-C-methyl-D-erythritol 2,4-cyclodiphosphate synthase (159 aa).

2 residues coordinate a divalent metal cation: Asp-8 and His-10. 4-CDP-2-C-methyl-D-erythritol 2-phosphate-binding positions include 8 to 10 (DVH) and 34 to 35 (HS). His-42 is a binding site for a divalent metal cation. 4-CDP-2-C-methyl-D-erythritol 2-phosphate contacts are provided by residues 56–58 (DIG), 61–65 (FPDTD), 100–106 (AQAPRML), 132–135 (TTTE), Phe-139, and Arg-142.

Belongs to the IspF family. As to quaternary structure, homotrimer. The cofactor is a divalent metal cation.

The enzyme catalyses 4-CDP-2-C-methyl-D-erythritol 2-phosphate = 2-C-methyl-D-erythritol 2,4-cyclic diphosphate + CMP. It functions in the pathway isoprenoid biosynthesis; isopentenyl diphosphate biosynthesis via DXP pathway; isopentenyl diphosphate from 1-deoxy-D-xylulose 5-phosphate: step 4/6. Involved in the biosynthesis of isopentenyl diphosphate (IPP) and dimethylallyl diphosphate (DMAPP), two major building blocks of isoprenoid compounds. Catalyzes the conversion of 4-diphosphocytidyl-2-C-methyl-D-erythritol 2-phosphate (CDP-ME2P) to 2-C-methyl-D-erythritol 2,4-cyclodiphosphate (ME-CPP) with a corresponding release of cytidine 5-monophosphate (CMP). The polypeptide is 2-C-methyl-D-erythritol 2,4-cyclodiphosphate synthase (Escherichia coli O6:K15:H31 (strain 536 / UPEC)).